We begin with the raw amino-acid sequence, 75 residues long: Pi-hexatoxin-Hi1d (75 aa).

6 cysteine pairs are disulfide-bonded: Cys-3–Cys-18, Cys-10–Cys-23, Cys-17–Cys-33, Cys-40–Cys-55, Cys-47–Cys-60, and Cys-54–Cys-71. 2 Domain repeats span residues 3–33 (CIRK…FEVC) and 40–71 (CLVK…SSVC). The interval 3-71 (CIRKWLSCVD…KRSGNKSSVC (69 aa)) is 2 X approximate repeats with cysteine pattern C-C-CC-C-C.

The protein belongs to the psalmotoxin-1 family. Double-knot toxin subfamily. Expressed by the venom gland.

It localises to the secreted. Its function is as follows. This toxin potently and selectively inhibits ASIC1a, an isoform of the gene ASIC1. It incompletely inhibits ASIC1a activation in a pH-independent and slowly reversible manner. This toxin acts by binding to and stabilizing the closed state of the channel, thereby impeding the transition into a conducting state. This toxin may bind to the acidic pocket of ASIC1a, since mutation of a key residue of this pocket (Arg-350) abolishes the ability of the toxin to inhibit ASIC1a. In vivo, this toxin protects the brain from neuronal injury when administered up to 8 hours after stroke onset. The protein is Pi-hexatoxin-Hi1d of Hadronyche infensa (Fraser island funnel-web spider).